The following is a 254-amino-acid chain: D-aminoacyl-tRNA deacylase (254 aa).

Residues 61–85 (KPTLTVHTPGNLTEDNSRGGNSEEI) are disordered. Residues 65–84 (TVHTPGNLTEDNSRGGNSEE) are compositionally biased toward polar residues.

Belongs to the DtdA deacylase family. Monomer. Zn(2+) is required as a cofactor.

It carries out the reaction a D-aminoacyl-tRNA + H2O = a tRNA + a D-alpha-amino acid + H(+). The catalysed reaction is glycyl-tRNA(Ala) + H2O = tRNA(Ala) + glycine + H(+). In terms of biological role, D-aminoacyl-tRNA deacylase with broad substrate specificity. By recycling D-aminoacyl-tRNA to D-amino acids and free tRNA molecules, this enzyme counteracts the toxicity associated with the formation of D-aminoacyl-tRNA entities in vivo. The polypeptide is D-aminoacyl-tRNA deacylase (Methanococcus maripaludis (strain C5 / ATCC BAA-1333)).